We begin with the raw amino-acid sequence, 796 residues long: Toll-like receptor 6 (796 aa).

A signal peptide spans 1–31 (MTKDKEPIVKSFHFVCLMIIIVGTRIQFSDG). The Extracellular segment spans residues 32 to 586 (NEFAVDKSKR…MSELSCNITL (555 aa)). LRR repeat units lie at residues 54–77 (TKVL…FLSE), 78–101 (LTVL…FNQD), 102–122 (LEYL…PIVS), 123–147 (FRHL…NLSQ), 148–168 (LNFL…PIAH), 169–196 (LHLS…ILNA), 197–219 (KTLH…SVNT), 220–250 (LGCL…RGST), 251–277 (LLNF…WPKP), 278–303 (VEYL…SKTT), 304–330 (LKAL…VFSE), 331–354 (MNIM…APST), 355–378 (FKFL…TLVK), 379–404 (LETL…DMPS), 405–429 (LEIL…WVES), 430–450 (IVVL…CLPP), 451–474 (RIKV…KLEA), 475–496 (LQEL…SFSS), and 497–520 (LSVL…SCQK). A disulfide bond links cysteine 117 and cysteine 139. N-linked (GlcNAc...) asparagine glycosylation is present at asparagine 144. 2 N-linked (GlcNAc...) asparagine glycosylation sites follow: asparagine 186 and asparagine 214. Cysteine 235 and cysteine 265 are oxidised to a cystine. 2 N-linked (GlcNAc...) asparagine glycosylation sites follow: asparagine 253 and asparagine 285. Cysteine 348 and cysteine 373 form a disulfide bridge. The N-linked (GlcNAc...) asparagine glycan is linked to asparagine 359. Residues asparagine 423 and asparagine 434 are each glycosylated (N-linked (GlcNAc...) asparagine). The cysteines at positions 424 and 447 are disulfide-linked. The region spanning 521-575 (MRSIKAGDNPFQCTCELREFVKNIDQVSSEVLEGWPDSYKCDYPESYRGSPLKDF) is the LRRCT domain. Asparagine 583 carries an N-linked (GlcNAc...) asparagine glycan. A helical transmembrane segment spans residues 587–607 (LIVTIGATMLVLAVTVTSLCI). Residues 608–796 (YLDLPWYLRM…LVTENNDVKS (189 aa)) lie on the Cytoplasmic side of the membrane. The TIR domain maps to 640–781 (LQFHAFISYS…LFWANIRAAF (142 aa)).

Belongs to the Toll-like receptor family. Homodimer (via cytoplasmic TIR domain). Heterodimer with TLR2 via their respective extracellular domains. Binds MYD88 via their respective TIR domains. Interacts with CD36, following CD36 stimulation by oxLDL or amyloid-beta 42, and forms a heterodimer with TLR4. The trimeric complex is internalized and triggers inflammatory response. LYN kinase activity facilitates TLR4:TLR6 heterodimerization and signal initiation. The heterodimer TLR2:TLR6 interacts with CD14 and CD36 in response to triacylated lipopeptides. As to expression, detected in monocytes, CD11c+ immature dendritic cells, plasmacytoid pre-dendritic cells and dermal microvessel endothelial cells.

The protein localises to the cell membrane. Its subcellular location is the cytoplasmic vesicle. The protein resides in the phagosome membrane. It localises to the membrane raft. It is found in the golgi apparatus. Participates in the innate immune response to Gram-positive bacteria and fungi. Specifically recognizes diacylated and, to a lesser extent, triacylated lipopeptides. In response to diacylated lipopeptides, forms the activation cluster TLR2:TLR6:CD14:CD36, this cluster triggers signaling from the cell surface and subsequently is targeted to the Golgi in a lipid-raft dependent pathway. Acts via MYD88 and TRAF6, leading to NF-kappa-B activation, cytokine secretion and the inflammatory response. Recognizes mycoplasmal macrophage-activating lipopeptide-2kD (MALP-2), soluble tuberculosis factor (STF), phenol-soluble modulin (PSM) and B.burgdorferi outer surface protein A lipoprotein (OspA-L) cooperatively with TLR2. In complex with TLR4, promotes sterile inflammation in monocytes/macrophages in response to oxidized low-density lipoprotein (oxLDL) or amyloid-beta 42. In this context, the initial signal is provided by oxLDL- or amyloid-beta 42-binding to CD36. This event induces the formation of a heterodimer of TLR4 and TLR6, which is rapidly internalized and triggers inflammatory response, leading to the NF-kappa-B-dependent production of CXCL1, CXCL2 and CCL9 cytokines, via MYD88 signaling pathway, and CCL5 cytokine, via TICAM1 signaling pathway, as well as IL1B secretion. This Homo sapiens (Human) protein is Toll-like receptor 6 (TLR6).